We begin with the raw amino-acid sequence, 1066 residues long: Ribosomal protein S6 kinase delta-1 (1066 aa).

In terms of domain architecture, PX spans 8-132; it reads SADLARFYTV…DFFKGGIIND (125 aa). The interval 207–228 is disordered; that stretch reads VASDSEQSKTEEERESRSLFPG. The segment covering 212 to 223 has biased composition (basic and acidic residues); it reads EQSKTEEERESR. The 29-residue stretch at 277–305 folds into the MIT domain; it reads VQGESSPTRREAVKRRTAEYLMRAESISS. Phosphoserine occurs at positions 282, 423, 427, 449, and 455. The region spanning 344 to 445 is the Protein kinase 1 domain; that stretch reads GVIDKVLLVM…PTLAKVHLQQ (102 aa). Residues 441 to 509 are disordered; the sequence is VHLQQPTSSP…SGSSSEEECT (69 aa). The span at 448-458 shows a compositional bias: low complexity; the sequence is SSPQDSSSFES. Over residues 474–483 the composition is skewed to polar residues; it reads SSLTPSSQDD. Residues 492–503 show a composition bias toward low complexity; it reads DSSPKWPDSGSS. Serine 494, serine 528, serine 583, serine 605, serine 608, serine 640, serine 661, serine 664, serine 667, and serine 794 each carry phosphoserine. Residues 553–596 form a disordered region; the sequence is HLAADSDSPSTQLRAHELKFFPNDDPEAVSSPRTSDSLSRSKNS. Residues 582–593 are compositionally biased toward low complexity; the sequence is SSPRTSDSLSRS. In terms of domain architecture, Protein kinase 2 spans 794 to 1056; sequence SSDPKFQGLG…VEDIKSHPFF (263 aa). ATP-binding positions include 801–809 and arginine 820; that span reads GLGVVESAV. Phosphoserine is present on serine 872. The active-site Proton acceptor is the aspartate 929.

This sequence belongs to the protein kinase superfamily. Ser/Thr protein kinase family. S6 kinase subfamily. In terms of assembly, interacts with SPHK1 and phosphatidylinositol 3-phosphate. Interacts (via PX domain) with PRDX3. Highly expressed in testis, skeletal muscle, brain, heart, placenta, kidney and liver and weakly expressed in thymus, small intestine, lung and colon.

Its subcellular location is the cytoplasm. It is found in the membrane. The protein resides in the early endosome. It catalyses the reaction L-seryl-[protein] + ATP = O-phospho-L-seryl-[protein] + ADP + H(+). The enzyme catalyses L-threonyl-[protein] + ATP = O-phospho-L-threonyl-[protein] + ADP + H(+). Its function is as follows. May be involved in transmitting sphingosine-1 phosphate (SPP)-mediated signaling into the cell. Plays a role in the recruitment of PRDX3 to early endosomes. The protein is Ribosomal protein S6 kinase delta-1 (RPS6KC1) of Homo sapiens (Human).